Here is a 700-residue protein sequence, read N- to C-terminus: Acetoacetyl-CoA synthetase (700 aa).

Positions 1-35 (MTAVSANGKTTEKHENGAHTNGTTNGTTNGSMNGN) are disordered. Positions 18–35 (AHTNGTTNGTTNGSMNGN) are enriched in low complexity.

This sequence belongs to the ATP-dependent AMP-binding enzyme family. In terms of tissue distribution, present in most cells of the organism.

It localises to the cytoplasm. Its subcellular location is the nucleus. It catalyses the reaction acetoacetate + ATP + CoA = acetoacetyl-CoA + AMP + diphosphate. In terms of biological role, activates acetoacetate to acetoacetyl-CoA. Negatively regulates let-60 Ras activity during vulval induction. This Caenorhabditis elegans protein is Acetoacetyl-CoA synthetase (sur-5).